The primary structure comprises 398 residues: Cell cycle checkpoint control protein RAD9B (398 aa).

The segment covering 272–281 has biased composition (polar residues); that stretch reads RTSSPQSLRL. Residues 272–359 are disordered; sequence RTSSPQSLRL…DMEEGQSPSP (88 aa). Positions 324–336 are enriched in low complexity; it reads SSSAAETRRASAS. Phosphoserine is present on residues Ser349 and Ser358.

Belongs to the rad9 family. Interacts with HUS1, HUS1B, RAD1, RAD9A and RAD17.

This Rattus norvegicus (Rat) protein is Cell cycle checkpoint control protein RAD9B (Rad9b).